The sequence spans 216 residues: Octanoyltransferase (216 aa).

Positions 29–209 constitute a BPL/LPL catalytic domain; that stretch reads DRAGECVWLL…SFDAVFGPCP (181 aa). Substrate is bound by residues 68–75, 140–142, and 153–155; these read RGGQYTYH, AIG, and GFA. The active-site Acyl-thioester intermediate is the C171.

This sequence belongs to the LipB family.

It localises to the cytoplasm. It catalyses the reaction octanoyl-[ACP] + L-lysyl-[protein] = N(6)-octanoyl-L-lysyl-[protein] + holo-[ACP] + H(+). It functions in the pathway protein modification; protein lipoylation via endogenous pathway; protein N(6)-(lipoyl)lysine from octanoyl-[acyl-carrier-protein]: step 1/2. In terms of biological role, catalyzes the transfer of endogenously produced octanoic acid from octanoyl-acyl-carrier-protein onto the lipoyl domains of lipoate-dependent enzymes. Lipoyl-ACP can also act as a substrate although octanoyl-ACP is likely to be the physiological substrate. The chain is Octanoyltransferase from Rhodospirillum rubrum (strain ATCC 11170 / ATH 1.1.1 / DSM 467 / LMG 4362 / NCIMB 8255 / S1).